Consider the following 457-residue polypeptide: Exodeoxyribonuclease 7 large subunit (457 aa).

The protein belongs to the XseA family. As to quaternary structure, heterooligomer composed of large and small subunits.

It is found in the cytoplasm. The catalysed reaction is Exonucleolytic cleavage in either 5'- to 3'- or 3'- to 5'-direction to yield nucleoside 5'-phosphates.. Bidirectionally degrades single-stranded DNA into large acid-insoluble oligonucleotides, which are then degraded further into small acid-soluble oligonucleotides. The polypeptide is Exodeoxyribonuclease 7 large subunit (Photorhabdus laumondii subsp. laumondii (strain DSM 15139 / CIP 105565 / TT01) (Photorhabdus luminescens subsp. laumondii)).